We begin with the raw amino-acid sequence, 238 residues long: Heme oxygenase 1 (238 aa).

Belongs to the heme oxygenase family.

It carries out the reaction heme b + 3 reduced [NADPH--hemoprotein reductase] + 3 O2 = biliverdin IXalpha + CO + Fe(2+) + 3 oxidized [NADPH--hemoprotein reductase] + 3 H2O + H(+). In terms of biological role, catalyzes the opening of the heme ring with the release of iron. Key enzyme in the synthesis of the chromophoric part of the photosynthetic antennae. Upon overexpression in E.coli with PCB:ferredoxin oxidoreductase, CpeS and either CpcB or PecB permits synthesis of phycocyanin-coupled CpcB or PecB. The chain is Heme oxygenase 1 (pbsA1) from Nostoc sp. (strain PCC 7120 / SAG 25.82 / UTEX 2576).